Consider the following 427-residue polypeptide: Acetylornithine aminotransferase (427 aa).

A disordered region spans residues 1 to 23 (MSLQTLIEQATNPPESGSAASSP). Pyridoxal 5'-phosphate is bound by residues 124–125 (GA) and Phe157. Arg160 provides a ligand contact to N(2)-acetyl-L-ornithine. Position 248–251 (248–251 (DEVQ)) interacts with pyridoxal 5'-phosphate. Residue Lys277 is modified to N6-(pyridoxal phosphate)lysine. Ser304 serves as a coordination point for N(2)-acetyl-L-ornithine. Thr305 provides a ligand contact to pyridoxal 5'-phosphate.

Belongs to the class-III pyridoxal-phosphate-dependent aminotransferase family. ArgD subfamily. In terms of assembly, homodimer. It depends on pyridoxal 5'-phosphate as a cofactor.

It is found in the cytoplasm. It carries out the reaction N(2)-acetyl-L-ornithine + 2-oxoglutarate = N-acetyl-L-glutamate 5-semialdehyde + L-glutamate. It functions in the pathway amino-acid biosynthesis; L-arginine biosynthesis; N(2)-acetyl-L-ornithine from L-glutamate: step 4/4. This is Acetylornithine aminotransferase from Nostoc sp. (strain PCC 7120 / SAG 25.82 / UTEX 2576).